Reading from the N-terminus, the 404-residue chain is Tryptophan synthase beta chain (404 aa).

Position 91 is an N6-(pyridoxal phosphate)lysine (lysine 91).

Belongs to the TrpB family. Tetramer of two alpha and two beta chains. It depends on pyridoxal 5'-phosphate as a cofactor.

The enzyme catalyses (1S,2R)-1-C-(indol-3-yl)glycerol 3-phosphate + L-serine = D-glyceraldehyde 3-phosphate + L-tryptophan + H2O. It functions in the pathway amino-acid biosynthesis; L-tryptophan biosynthesis; L-tryptophan from chorismate: step 5/5. The beta subunit is responsible for the synthesis of L-tryptophan from indole and L-serine. The chain is Tryptophan synthase beta chain from Clavibacter michiganensis subsp. michiganensis (strain NCPPB 382).